The following is a 156-amino-acid chain: Cyclic pyranopterin monophosphate synthase (156 aa).

Substrate-binding positions include 75-77 and 111-112; these read LCH and ME. Residue Asp126 is part of the active site.

Belongs to the MoaC family. Homohexamer; trimer of dimers.

The enzyme catalyses (8S)-3',8-cyclo-7,8-dihydroguanosine 5'-triphosphate = cyclic pyranopterin phosphate + diphosphate. It participates in cofactor biosynthesis; molybdopterin biosynthesis. Its function is as follows. Catalyzes the conversion of (8S)-3',8-cyclo-7,8-dihydroguanosine 5'-triphosphate to cyclic pyranopterin monophosphate (cPMP). The sequence is that of Cyclic pyranopterin monophosphate synthase from Caulobacter sp. (strain K31).